A 452-amino-acid polypeptide reads, in one-letter code: Cell division protein FtsZ (452 aa).

GTP-binding positions include 24–28 (GAGSN), 111–113 (GTG), Glu-142, Arg-146, and Asp-190.

It belongs to the FtsZ family. As to quaternary structure, homodimer. Polymerizes to form a dynamic ring structure in a strictly GTP-dependent manner. Interacts directly with several other division proteins.

Its subcellular location is the cytoplasm. Its function is as follows. Essential cell division protein that forms a contractile ring structure (Z ring) at the future cell division site. The regulation of the ring assembly controls the timing and the location of cell division. One of the functions of the FtsZ ring is to recruit other cell division proteins to the septum to produce a new cell wall between the dividing cells. Binds GTP and shows GTPase activity. This is Cell division protein FtsZ from Rickettsia felis (strain ATCC VR-1525 / URRWXCal2) (Rickettsia azadi).